Here is a 215-residue protein sequence, read N- to C-terminus: NADH-quinone oxidoreductase subunit C (215 aa).

Belongs to the complex I 30 kDa subunit family. As to quaternary structure, NDH-1 is composed of 14 different subunits. Subunits NuoB, C, D, E, F, and G constitute the peripheral sector of the complex.

Its subcellular location is the cell inner membrane. The enzyme catalyses a quinone + NADH + 5 H(+)(in) = a quinol + NAD(+) + 4 H(+)(out). NDH-1 shuttles electrons from NADH, via FMN and iron-sulfur (Fe-S) centers, to quinones in the respiratory chain. The immediate electron acceptor for the enzyme in this species is believed to be ubiquinone. Couples the redox reaction to proton translocation (for every two electrons transferred, four hydrogen ions are translocated across the cytoplasmic membrane), and thus conserves the redox energy in a proton gradient. This is NADH-quinone oxidoreductase subunit C from Francisella philomiragia subsp. philomiragia (strain ATCC 25017 / CCUG 19701 / FSC 153 / O#319-036).